We begin with the raw amino-acid sequence, 1160 residues long: AF4/FMR2 family member 4 (1160 aa).

The segment covering 1–19 (MNREDRNVLRMKERERRNQ) has biased composition (basic and acidic residues). Disordered stretches follow at residues 1-42 (MNRE…YKVT), 78-289 (PKPA…SKAH), 322-908 (WPPP…FDDR), and 1031-1070 (NSYSNSQAPSPGLGSKAVGMPSPVSPKLSPGNSGSYSSGG). Residues 115-128 (PSTSQSQKRSSALQ) show a composition bias toward polar residues. Serine 120 carries the phosphoserine modification. Positions 172–189 (RSSSPGKPQAVSSLSSSH) are enriched in low complexity. Residues 193-212 (HGNDHHSKEHQRSKSPRDPD) show a composition bias toward basic and acidic residues. Residue serine 207 is modified to Phosphoserine. A compositionally biased stretch (low complexity) spans 229 to 247 (SSQSFPPSLMSKSSSMLQK). 2 stretches are compositionally biased toward polar residues: residues 268-280 (EHYSSQSHGNSMT) and 360-370 (YSTAKTSNGHQ). 4 positions are modified to phosphoserine: serine 382, serine 383, serine 384, and serine 387. Over residues 398–407 (PRSTPGSNSE) the composition is skewed to polar residues. Over residues 408–424 (PSHHNSEGADNSRDDSS) the composition is skewed to basic and acidic residues. Positions 425–457 (SHSGSESSSGSDSESESSSSDSEANEPSQSASP) are enriched in low complexity. Serine 482, serine 485, and serine 486 each carry phosphoserine. Polar residues-rich tracts occupy residues 483-496 (PASSVDSNIPSSQA), 505-523 (GTASNYTDPGGTKETSSAT), and 544-555 (SPAQSDSTTQRR). Serine 544 is modified (phosphoserine). Residues 563-581 (KKPEKSAAEEPRGGLKIES) are compositionally biased toward basic and acidic residues. Lysine 578 is covalently cross-linked (Glycyl lysine isopeptide (Lys-Gly) (interchain with G-Cter in SUMO2)). A compositionally biased stretch (basic residues) spans 594 to 607 (SRHKAATKGSRKPN). Basic and acidic residues predominate over residues 608–622 (IKKESKSSPRPTAEK). The segment covering 641-657 (TDTSSSDSDGSESLPPS) has biased composition (low complexity). Serine 666 carries the phosphoserine modification. Threonine 669 is modified (phosphothreonine). 4 positions are modified to phosphoserine: serine 675, serine 689, serine 698, and serine 701. Tyrosine 707 carries the phosphotyrosine modification. Composition is skewed to basic and acidic residues over residues 725 to 756 (PYKETEPPKGEKKNVPEKHSREVQKQASEKAS), 764 to 784 (KNDDDTRASESKKPKTEDKNS), and 794 to 806 (ESSKQSSTKEKDL). Phosphoserine is present on serine 809. Lysine 817 is subject to N6-acetyllysine. Serine 831 carries the phosphoserine modification. 2 stretches are compositionally biased toward low complexity: residues 831-859 (SQSSSLKSSGTSSKENSGSSSKSSSSSTA) and 880-895 (PNSSSNCPPSTPTSES). 4 positions are modified to phosphoserine: serine 1040, serine 1052, serine 1055, and serine 1059. The segment covering 1059-1070 (SPGNSGSYSSGG) has biased composition (low complexity).

The protein belongs to the AF4 family. As to quaternary structure, component of the super elongation complex (SEC), at least composed of EAF1, EAF2, CDK9, MLLT3/AF9, AFF (AFF1 or AFF4), the P-TEFb complex and ELL (ELL, ELL2 or ELL3). Interacts with ELL2; the interaction is direct and leads to stabilize ELL2 and prevent ELL2 ubiquitination and degradation. Interacts with ELL3; the interaction is direct. Dephosphorylated at Ser-544 by the PNUTS-PP1 complex, promoting RNA polymerase II transcription pause-release. Highly expressed in testis by Sertoli cells, and at low levels in other tissues.

It is found in the nucleus. The protein resides in the chromosome. Its function is as follows. Key component of the super elongation complex (SEC), a complex required to increase the catalytic rate of RNA polymerase II transcription by suppressing transient pausing by the polymerase at multiple sites along the DNA. In the SEC complex, AFF4 acts as a central scaffold that recruits other factors through direct interactions with ELL proteins (ELL, ELL2 or ELL3) and the P-TEFb complex. The polypeptide is AF4/FMR2 family member 4 (Aff4) (Mus musculus (Mouse)).